A 230-amino-acid polypeptide reads, in one-letter code: MADLLGSILSSMEKPPTVHDQESRRKAREQAARLKKLEEDERRKKAEFRKKMEKEVSEFIKDSTLQKKKYNPMGKIERSILHDVAEVAGLTSFSFGEDEESRYVMLFKKEFAPSDEELEAYRKGEEWDPQKAEERRRLKEKAALEEEAASHTQKRPASPNSNYRDKYSHLIGTSAAKDAAHTLQANRAYGCVPVANKRDTRSIEEAMNEIRAKKRQKKGDEEAAGSGSSV.

The segment at 1-45 is disordered; sequence MADLLGSILSSMEKPPTVHDQESRRKAREQAARLKKLEEDERRKK. Basic and acidic residues predominate over residues 16–45; the sequence is PTVHDQESRRKAREQAARLKKLEEDERRKK. Residues 46–109 form the R3H domain; the sequence is AEFRKKMEKE…ESRYVMLFKK (64 aa). Over residues 119–144 the composition is skewed to basic and acidic residues; it reads EAYRKGEEWDPQKAEERRRLKEKAAL. 2 disordered regions span residues 119–169 and 185–230; these read EAYR…KYSH and ANRA…GSSV. S158 is subject to Phosphoserine. Residues 196–211 are compositionally biased toward basic and acidic residues; that stretch reads NKRDTRSIEEAMNEIR.

The sequence is that of Sperm-associated antigen 7 homolog (spag7) from Danio rerio (Zebrafish).